The sequence spans 291 residues: UDP-N-acetylenolpyruvoylglucosamine reductase (291 aa).

The FAD-binding PCMH-type domain occupies 22 to 187 (RIGGPARYFK…ASATFQLTKD (166 aa)). The active site involves arginine 166. Cysteine 214 (proton donor) is an active-site residue. Glutamate 283 is a catalytic residue.

This sequence belongs to the MurB family. FAD serves as cofactor.

It is found in the cytoplasm. It carries out the reaction UDP-N-acetyl-alpha-D-muramate + NADP(+) = UDP-N-acetyl-3-O-(1-carboxyvinyl)-alpha-D-glucosamine + NADPH + H(+). The protein operates within cell wall biogenesis; peptidoglycan biosynthesis. Its function is as follows. Cell wall formation. This Chlamydia trachomatis serovar L2 (strain ATCC VR-902B / DSM 19102 / 434/Bu) protein is UDP-N-acetylenolpyruvoylglucosamine reductase.